The chain runs to 200 residues: Large ribosomal subunit protein uL4 (200 aa).

The interval 43–71 (RAQKTRAEVSGSGKKPWRQKGTGRARSGD) is disordered.

Belongs to the universal ribosomal protein uL4 family. Part of the 50S ribosomal subunit.

One of the primary rRNA binding proteins, this protein initially binds near the 5'-end of the 23S rRNA. It is important during the early stages of 50S assembly. It makes multiple contacts with different domains of the 23S rRNA in the assembled 50S subunit and ribosome. Functionally, forms part of the polypeptide exit tunnel. The protein is Large ribosomal subunit protein uL4 of Aggregatibacter actinomycetemcomitans (Actinobacillus actinomycetemcomitans).